An 81-amino-acid chain; its full sequence is Apolipoprotein C-I, acidic form (81 aa).

The N-terminal stretch at 1-24 (MRLFLSLLVVVLSIVLEGPTPAQG) is a signal peptide.

This sequence belongs to the apolipoprotein C1 family.

It localises to the secreted. This Theropithecus gelada (Gelada baboon) protein is Apolipoprotein C-I, acidic form (APOC1A).